Here is a 354-residue protein sequence, read N- to C-terminus: G-protein coupled estrogen receptor 1 (354 aa).

The Extracellular portion of the chain corresponds to 1-40; that stretch reads MEEQTTSLVWIYVNSTEQLNTSYEYNTTYLIEDSDKYQSY. The helical transmembrane segment at 41 to 61 threads the bilayer; that stretch reads VIGLFLSCLYTILLFPIGFIG. Over 62–81 the chain is Cytoplasmic; it reads NILILVVNLNHRGKMAIPDL. Residues 82 to 102 traverse the membrane as a helical segment; sequence YFVNLAVADLILVADSLIEVF. Residues 103 to 112 are Extracellular-facing; the sequence is NLNEKYYDYA. The chain crosses the membrane as a helical span at residues 113–133; that stretch reads VLCTFMSLFLQVNMYSSIFFL. C115 and C192 are joined by a disulfide. Residues 134–160 lie on the Cytoplasmic side of the membrane; that stretch reads TWMSFDRYIALANSMSSSPLRTMQHAK. A helical membrane pass occupies residues 161–181; that stretch reads LSCGLIWMASILATLLPFTIV. Residues 182–202 lie on the Extracellular side of the membrane; the sequence is QTQHRGEVHFCFANVFEIQWL. The chain crosses the membrane as a helical span at residues 203–223; the sequence is EVTIGFLVPFSIIGLCYSLIG. At 224-245 the chain is on the cytoplasmic side; sequence RILMRSQKHRGLWPRRQKALRM. The chain crosses the membrane as a helical span at residues 246–266; sequence IVVVVLVFFICWLPENVFISI. Residues 267-292 lie on the Extracellular side of the membrane; the sequence is QLLQGTADPSQRTATTLRHDYPLTGH. Residues 293 to 313 traverse the membrane as a helical segment; the sequence is IVNLAAFSNSCLNPIIYSFLG. Topologically, residues 314-353 are cytoplasmic; it reads ETFRDKLRLFIKQKASWSVVNRFCHHGLDLHLPVRSEVSE.

Belongs to the G-protein coupled receptor 1 family. As to quaternary structure, homodimer. Heterodimer. As to expression, expressed in oocytes (at protein level). Highly expressed in brain, heart, testis and ovary. Weakly expressed in muscle and intestine.

It localises to the nucleus. It is found in the cytoplasm. The protein resides in the perinuclear region. Its subcellular location is the cytoskeleton. The protein localises to the cytoplasmic vesicle membrane. It localises to the cell membrane. It is found in the basolateral cell membrane. The protein resides in the endoplasmic reticulum membrane. Its subcellular location is the early endosome. The protein localises to the recycling endosome. It localises to the golgi apparatus. It is found in the trans-Golgi network. The protein resides in the golgi apparatus membrane. Its subcellular location is the cell projection. The protein localises to the dendrite. It localises to the dendritic spine membrane. It is found in the axon. The protein resides in the postsynaptic density. Its subcellular location is the mitochondrion membrane. Membrane G-protein coupled estrogen receptor that binds to 17-beta-estradiol (E2) with high affinity, leading to rapid and transient activation of numerous intracellular signaling pathways. Plays a role in the embryonic development of sensory and motor neurons. May induce apoptosis and reduce proliferation of brain cells. Involved in maintenance of meiotic arrest in oocytes. This is G-protein coupled estrogen receptor 1 (gper1) from Micropogonias undulatus (Atlantic croaker).